A 104-amino-acid polypeptide reads, in one-letter code: Large ribosomal subunit protein uL24 (104 aa).

This sequence belongs to the universal ribosomal protein uL24 family. As to quaternary structure, part of the 50S ribosomal subunit.

In terms of biological role, one of two assembly initiator proteins, it binds directly to the 5'-end of the 23S rRNA, where it nucleates assembly of the 50S subunit. Its function is as follows. One of the proteins that surrounds the polypeptide exit tunnel on the outside of the subunit. This chain is Large ribosomal subunit protein uL24, found in Shewanella denitrificans (strain OS217 / ATCC BAA-1090 / DSM 15013).